The chain runs to 93 residues: UPF0223 protein SAG0995 (93 aa).

It belongs to the UPF0223 family.

This chain is UPF0223 protein SAG0995, found in Streptococcus agalactiae serotype V (strain ATCC BAA-611 / 2603 V/R).